The chain runs to 248 residues: ATP synthase subunit a (248 aa).

The next 6 helical transmembrane spans lie at 25–45 (IAFTNSSAYMFAAVAIIAVMM), 83–103 (FFPLVFSLFMFIAVSNLVGII), 113–133 (LIVTVTLAMLVFVTVLVYGLA), 142–162 (LFVPSGVPIYILPLVVFIEVI), 192–212 (FIAMLGALGVVGWVGAVLPLG), and 215–235 (IALTALELLVAFLQAYVFAIL).

The protein belongs to the ATPase A chain family. In terms of assembly, F-type ATPases have 2 components, CF(1) - the catalytic core - and CF(0) - the membrane proton channel. CF(1) has five subunits: alpha(3), beta(3), gamma(1), delta(1), epsilon(1). CF(0) has four main subunits: a, b, b' and c.

The protein localises to the cell inner membrane. Its function is as follows. Key component of the proton channel; it plays a direct role in the translocation of protons across the membrane. This chain is ATP synthase subunit a, found in Rhodopseudomonas palustris (strain HaA2).